Here is a 375-residue protein sequence, read N- to C-terminus: 1-deoxy-D-xylulose 5-phosphate reductoisomerase (375 aa).

Thr12, Gly13, Ser14, Ile15, Asn39, and Asn115 together coordinate NADPH. Residue Lys116 coordinates 1-deoxy-D-xylulose 5-phosphate. Residue Glu117 coordinates NADPH. Mn(2+) is bound at residue Asp141. The 1-deoxy-D-xylulose 5-phosphate site is built by Ser142, Glu143, Ser163, and His186. Glu143 is a binding site for Mn(2+). Gly192 provides a ligand contact to NADPH. 1-deoxy-D-xylulose 5-phosphate is bound by residues Ser199, Asn204, Lys205, and Glu208. Glu208 provides a ligand contact to Mn(2+).

The protein belongs to the DXR family. Requires Mg(2+) as cofactor. It depends on Mn(2+) as a cofactor.

The catalysed reaction is 2-C-methyl-D-erythritol 4-phosphate + NADP(+) = 1-deoxy-D-xylulose 5-phosphate + NADPH + H(+). Its pathway is isoprenoid biosynthesis; isopentenyl diphosphate biosynthesis via DXP pathway; isopentenyl diphosphate from 1-deoxy-D-xylulose 5-phosphate: step 1/6. Functionally, catalyzes the NADPH-dependent rearrangement and reduction of 1-deoxy-D-xylulose-5-phosphate (DXP) to 2-C-methyl-D-erythritol 4-phosphate (MEP). This chain is 1-deoxy-D-xylulose 5-phosphate reductoisomerase, found in Thermotoga neapolitana (strain ATCC 49049 / DSM 4359 / NBRC 107923 / NS-E).